The chain runs to 347 residues: Selenide, water dikinase (347 aa).

Cys17 is a catalytic residue. Residues Lys20 and 48–50 each bind ATP; that span reads TRD. A Mg(2+)-binding site is contributed by Asp51. Residues Asp68, Asp91, and 139-141 each bind ATP; that span reads GHS. Residue Asp91 participates in Mg(2+) binding. Mg(2+) is bound at residue Asp227.

It belongs to the selenophosphate synthase 1 family. Class I subfamily. As to quaternary structure, homodimer. It depends on Mg(2+) as a cofactor.

It catalyses the reaction hydrogenselenide + ATP + H2O = selenophosphate + AMP + phosphate + 2 H(+). In terms of biological role, synthesizes selenophosphate from selenide and ATP. This is Selenide, water dikinase from Salmonella typhi.